Consider the following 98-residue polypeptide: MMCGAPSATQPATAETQHIADQVRSQLEEKENKKFPVFKAVSFKSQVVAGTNYFIKVHVGDEEFVHLRVFQSLPHENKPLTLSNYQTNKAKHDELTYF.

Met1 is modified (N-acetylmethionine). The short motif at 46-50 (QVVAG) is the Secondary area of contact element.

Belongs to the cystatin family. Able to form dimers stabilized by noncovalent forces.

It is found in the cytoplasm. Its subcellular location is the nucleus. In terms of biological role, this is an intracellular thiol proteinase inhibitor. Tightly binding reversible inhibitor of cathepsins L, H and B. The chain is Cystatin-B (CSTB) from Pan troglodytes (Chimpanzee).